Reading from the N-terminus, the 155-residue chain is Ribosome maturation factor RimP (155 aa).

It belongs to the RimP family.

The protein localises to the cytoplasm. Its function is as follows. Required for maturation of 30S ribosomal subunits. This chain is Ribosome maturation factor RimP, found in Parasynechococcus marenigrum (strain WH8102).